A 3159-amino-acid chain; its full sequence is E1A-binding protein p400 (3159 aa).

A compositionally biased stretch (polar residues) spans 1 to 16 (MHHGTGPQNVQHQLQR). Disordered regions lie at residues 1–65 (MHHG…MNRS), 125–154 (SPLS…RAGA), 212–261 (PGTP…HITT), 282–359 (VLQG…PASP), 545–594 (LMPT…PQLP), 633–658 (QQPN…AQLA), and 684–770 (TRLP…SQDT). Pro residues predominate over residues 31 to 41 (HPNPPPSPAAP). The segment covering 42-55 (FAPSASPSAPQSPS) has biased composition (low complexity). Phosphoserine is present on serine 53. Positions 56–65 (YQIQQLMNRS) are enriched in polar residues. Low complexity-rich tracts occupy residues 125–137 (SPLS…QSPT) and 237–256 (LGPQ…LASP). Serine 135 is modified (phosphoserine). Residues serine 315 and serine 321 each carry the phosphoserine modification. Residues 558 to 571 (QAAQLAGQRQSQQQ) are compositionally biased toward low complexity. The segment covering 572–585 (YDPSTGPPVQNAAS) has biased composition (polar residues). Composition is skewed to pro residues over residues 637–653 (VPIP…PPSQ) and 689–698 (DPAPPCPRPL). Residues 699–711 (PTSSTSSLAPVSG) show a composition bias toward low complexity. 2 stretches are compositionally biased toward polar residues: residues 725–742 (NRPS…TSRT) and 751–760 (TKPQSPAQNA). Residues serine 736 and serine 755 each carry the phosphoserine modification. Over residues 761–770 (TSSQDSSQDT) the composition is skewed to low complexity. Residues 799–871 (LPKLQEAPRP…EQSRLRRIAA (73 aa)) form the HSA domain. Disordered regions lie at residues 915-967 (ELRP…GVVD) and 997-1024 (SSQW…GDRE). Serine 928 and serine 941 each carry phosphoserine. At threonine 945 the chain carries Phosphothreonine. Composition is skewed to acidic residues over residues 945 to 962 (TDDE…EEAN) and 1008 to 1019 (EDTSGEEDADDC). An interactions with RUVBL1 and RUVBL2 region spans residues 951–1365 (DEEETIEEEE…NVLSILVRLQ (415 aa)). Serine 1011 carries the phosphoserine modification. In terms of domain architecture, Helicase ATP-binding spans 1103-1268 (AKLYRKNLNG…WTMVHFLVPG (166 aa)). 1116–1123 (DEAGLGKT) contributes to the ATP binding site. A DEAH box-like motif is present at residues 1219–1222 (DEMQ). A disordered region spans residues 1467–1582 (VQYGQKPEGR…QAPSHAAGQS (116 aa)). Lysine 1472 bears the N6-acetyllysine mark. Low complexity-rich tracts occupy residues 1481–1498 (PSTH…SAAP) and 1538–1565 (PASA…ASTP). 3 positions are modified to phosphoserine: serine 1547, serine 1728, and serine 1732. A disordered region spans residues 1787 to 1807 (GSLDGRRGKEAGPAHSYTSSS). A compositionally biased stretch (basic and acidic residues) spans 1789 to 1798 (LDGRRGKEAG). The Helicase C-terminal domain occupies 1899–2056 (KLEALAILLQ…GNDYSMAFLT (158 aa)). Disordered regions lie at residues 2119-2144 (KSAQ…PCDE) and 2287-2311 (KERK…GEAV). N6-acetyllysine occurs at positions 2349 and 2356. Residues 2360–2429 (EPGQDNPEWL…QCRNRYENVI (70 aa)) enclose the Myb-like domain. Disordered stretches follow at residues 2524 to 2602 (KEKK…AQPA) and 2665 to 2688 (TPGG…GSPA). Residues 2524–2789 (KEKKALADQQ…QQQQQTTTTS (266 aa)) are interaction with ZNF42. Over residues 2530 to 2540 (ADQQKAQQPAV) the composition is skewed to low complexity. Pro residues-rich tracts occupy residues 2541 to 2563 (AQPP…PLPQ) and 2572 to 2589 (PAGP…PQTQ). The span at 2590–2602 (PQPVQAPAKAQPA) shows a compositional bias: low complexity. The residue at position 2686 (serine 2686) is a Phosphoserine. Threonine 2813 carries the post-translational modification Phosphothreonine. Disordered regions lie at residues 2821–2869 (QKQK…TAPR) and 3115–3159 (APLQ…PPCQ). Residues 2828–2843 (PPQPPPPQAQSAPPQP) show a composition bias toward pro residues. Residues 2844-2866 (TAQVQVQTSQPPQQQSPQLTTVT) are compositionally biased toward low complexity. Residues 3129–3140 (PASSDSPSQQPK) are compositionally biased toward polar residues.

The protein belongs to the SNF2/RAD54 helicase family. SWR1 subfamily. Component of the NuA4 histone acetyltransferase complex which contains the catalytic subunit KAT5/TIP60 and the subunits EP400, TRRAP/PAF400, BRD8/SMAP, EPC1, DMAP1/DNMAP1, RUVBL1/TIP49, RUVBL2, ING3, actin, ACTL6A/BAF53A, MORF4L1/MRG15, MORF4L2/MRGX, MRGBP, YEATS4/GAS41, VPS72/YL1 and MEAF6. May also participate in the formation of NuA4 related complexes which lack the KAT5/TIP60 catalytic subunit, but which include the SWI/SNF related protein SRCAP. The NuA4 complex interacts with MYC and the adenovirus E1A protein. EP400 interacts with TRRAP, RUVBL1 and RUVBL2. Component of a SWR1-like complex. Interacts with ZNF42. Interacts with PHF5A. Interacts with human cytomegalovirus UL27. Interacts with human adenovirus 5 E1A protein; this interaction stabilizes MYC. As to expression, ubiquitously expressed.

Its subcellular location is the nucleus. Its function is as follows. Component of the NuA4 histone acetyltransferase complex which is involved in transcriptional activation of select genes principally by acetylation of nucleosomal histones H4 and H2A. This modification may both alter nucleosome - DNA interactions and promote interaction of the modified histones with other proteins which positively regulate transcription. May be required for transcriptional activation of E2F1 and MYC target genes during cellular proliferation. The NuA4 complex ATPase and helicase activities seem to be, at least in part, contributed by the association of RUVBL1 and RUVBL2 with EP400. May regulate ZNF42 transcription activity. Component of a SWR1-like complex that specifically mediates the removal of histone H2A.Z/H2AZ1 from the nucleosome. This Homo sapiens (Human) protein is E1A-binding protein p400 (EP400).